Here is a 258-residue protein sequence, read N- to C-terminus: uncharacterized protein (258 aa).

Solcar repeat units follow at residues 9–78 (KPIL…AKAR), 81–160 (PGVR…FKKK), and 165–246 (DHVF…VKSH). A run of 6 helical transmembrane segments spans residues 11–31 (ILVG…LSTI), 53–73 (GLSS…FVYE), 87–107 (LVSA…AEVV), 139–159 (MCGR…QFKK), 171–191 (PKGA…LDVI), and 218–239 (FEKG…YLGT).

The protein belongs to the mitochondrial carrier (TC 2.A.29) family.

Its subcellular location is the mitochondrion inner membrane. This is an uncharacterized protein from Schizosaccharomyces pombe (strain 972 / ATCC 24843) (Fission yeast).